The primary structure comprises 157 residues: UPF0179 protein Mhun_1135 (157 aa).

This sequence belongs to the UPF0179 family.

In Methanospirillum hungatei JF-1 (strain ATCC 27890 / DSM 864 / NBRC 100397 / JF-1), this protein is UPF0179 protein Mhun_1135.